A 286-amino-acid polypeptide reads, in one-letter code: Hydroxysteroid 11-beta-dehydrogenase 1-like protein (286 aa).

The N-terminal stretch at 1–17 (MGIHIKRWCFIILVASA) is a signal peptide. Residues 39–65 (GAST…TARR), 90–91 (DM), and 117–119 (NHI) each bind NADP(+). S168 contacts substrate. The Proton acceptor role is filled by Y181. NADP(+)-binding positions include 181-185 (YAASK) and 214-220 (GLIDTQS).

Belongs to the short-chain dehydrogenases/reductases (SDR) family.

It localises to the secreted. It carries out the reaction cortisone + NADPH + H(+) = cortisol + NADP(+). Its function is as follows. Unidirectional NADP(+)-dependent cortisol dehydrogenase (in vitro). The sequence is that of Hydroxysteroid 11-beta-dehydrogenase 1-like protein (hsd11b1l) from Xenopus tropicalis (Western clawed frog).